The chain runs to 127 residues: Gonadotropin subunit beta-1 (127 aa).

A signal peptide spans 1-22 (MHLAVTALCLTLAPVLARASTS). Intrachain disulfides connect Cys23–Cys71, Cys37–Cys86, Cys40–Cys124, Cys48–Cys102, Cys52–Cys104, and Cys107–Cys114. N-linked (GlcNAc...) asparagine glycosylation is found at Asn27 and Asn44.

It belongs to the glycoprotein hormones subunit beta family. In terms of assembly, heterodimer of an alpha and a beta chain.

The protein localises to the secreted. Its function is as follows. Involved in gametogenesis and steroidogenesis. This is Gonadotropin subunit beta-1 (cgba) from Anguilla japonica (Japanese eel).